The primary structure comprises 424 residues: Zona pellucida sperm-binding protein 3 (424 aa).

An N-terminal signal peptide occupies residues 1 to 22 (MELSYRLFICLLLWGSTELCYP). Gln-23 bears the Pyrrolidone carboxylic acid mark. Residues 23–387 (QPLWLLQGGA…QWALPSDTSV (365 aa)) are Extracellular-facing. One can recognise a ZP domain in the interval 45 to 307 (ECQEATLMVM…KACSFSKPSN (263 aa)). 2 disulfides stabilise this stretch: Cys-46-Cys-140 and Cys-78-Cys-99. Residues Asn-125 and Asn-147 are each glycosylated (N-linked (GlcNAc...) asparagine). Residues Thr-156, Thr-162, and Thr-163 are each glycosylated (O-linked (GalNAc...) threonine). Intrachain disulfides connect Cys-217–Cys-282 and Cys-239–Cys-300. N-linked (GlcNAc...) asparagine glycosylation is present at Asn-272. The interval 330 to 356 (PSHSRRQPHVMSQWSRSASRNRRHVTE) is disordered. The propeptide at 351–424 (RRHVTEEADV…TASHPVSASE (74 aa)) is removed in mature form. Residues 388-408 (VLLGVGLAVVVSLTLTAVILV) form a helical membrane-spanning segment. Topologically, residues 409–424 (LTRRCRTASHPVSASE) are cytoplasmic.

This sequence belongs to the ZP domain family. ZPC subfamily. As to quaternary structure, polymers of ZP2 and ZP3 organized into long filaments cross-linked by ZP1 homodimers. Interacts with ZP1 and ZP2. Post-translationally, proteolytically cleaved before the transmembrane segment to yield the secreted ectodomain incorporated in the zona pellucida. N-glycosylated. In terms of processing, O-glycosylated; removal of O-linked glycans may play an important role in the post-fertilization block to polyspermy. Expressed in oocytes (at protein level).

It localises to the zona pellucida. It is found in the cell membrane. Functionally, component of the zona pellucida, an extracellular matrix surrounding oocytes which mediates sperm binding, induction of the acrosome reaction and prevents post-fertilization polyspermy. The zona pellucida is composed of 3 to 4 glycoproteins, ZP1, ZP2, ZP3, and ZP4. ZP3 is essential for sperm binding and zona matrix formation. The polypeptide is Zona pellucida sperm-binding protein 3 (ZP3) (Homo sapiens (Human)).